We begin with the raw amino-acid sequence, 350 residues long: Arabinogalactan endo-beta-1,4-galactanase A (350 aa).

Residues 1-16 form the signal peptide; sequence MIYPLLLSALPLLSSA. Residue Asn128 is glycosylated (N-linked (GlcNAc...) asparagine). Glu152 functions as the Proton donor in the catalytic mechanism. Glu262 functions as the Nucleophile in the catalytic mechanism.

Belongs to the glycosyl hydrolase 53 family.

It localises to the secreted. The enzyme catalyses The enzyme specifically hydrolyzes (1-&gt;4)-beta-D-galactosidic linkages in type I arabinogalactans.. Its function is as follows. Endogalactanase involved in the degradation of plant cell wall polysaccharides, and more particularly of hairy regions of pectin. In Aspergillus niger, this protein is Arabinogalactan endo-beta-1,4-galactanase A (galA).